The sequence spans 565 residues: Sulfite reductase [NADPH] hemoprotein beta-component (565 aa).

4 residues coordinate [4Fe-4S] cluster: Cys-429, Cys-435, Cys-474, and Cys-478. Cys-478 is a binding site for siroheme.

It belongs to the nitrite and sulfite reductase 4Fe-4S domain family. As to quaternary structure, alpha(8)-beta(8). The alpha component is a flavoprotein, the beta component is a hemoprotein. Siroheme is required as a cofactor. Requires [4Fe-4S] cluster as cofactor.

It catalyses the reaction hydrogen sulfide + 3 NADP(+) + 3 H2O = sulfite + 3 NADPH + 4 H(+). Its pathway is sulfur metabolism; hydrogen sulfide biosynthesis; hydrogen sulfide from sulfite (NADPH route): step 1/1. Its function is as follows. Component of the sulfite reductase complex that catalyzes the 6-electron reduction of sulfite to sulfide. This is one of several activities required for the biosynthesis of L-cysteine from sulfate. In Shewanella baltica (strain OS223), this protein is Sulfite reductase [NADPH] hemoprotein beta-component.